A 445-amino-acid polypeptide reads, in one-letter code: Phosphoglucosamine mutase (445 aa).

Catalysis depends on serine 102, which acts as the Phosphoserine intermediate. Mg(2+)-binding residues include serine 102, aspartate 241, aspartate 243, and aspartate 245. Serine 102 carries the phosphoserine modification.

It belongs to the phosphohexose mutase family. Requires Mg(2+) as cofactor. Activated by phosphorylation.

The catalysed reaction is alpha-D-glucosamine 1-phosphate = D-glucosamine 6-phosphate. Catalyzes the conversion of glucosamine-6-phosphate to glucosamine-1-phosphate. The chain is Phosphoglucosamine mutase from Salmonella choleraesuis (strain SC-B67).